We begin with the raw amino-acid sequence, 335 residues long: Biotin synthase (335 aa).

In terms of domain architecture, Radical SAM core spans 46–274 (YKVQLASLFS…KSKIRLSAGR (229 aa)). Positions 61, 65, and 68 each coordinate [4Fe-4S] cluster. Residues cysteine 105, cysteine 137, cysteine 197, and arginine 269 each coordinate [2Fe-2S] cluster.

This sequence belongs to the radical SAM superfamily. Biotin synthase family. In terms of assembly, homodimer. [4Fe-4S] cluster is required as a cofactor. The cofactor is [2Fe-2S] cluster.

The enzyme catalyses (4R,5S)-dethiobiotin + (sulfur carrier)-SH + 2 reduced [2Fe-2S]-[ferredoxin] + 2 S-adenosyl-L-methionine = (sulfur carrier)-H + biotin + 2 5'-deoxyadenosine + 2 L-methionine + 2 oxidized [2Fe-2S]-[ferredoxin]. It functions in the pathway cofactor biosynthesis; biotin biosynthesis; biotin from 7,8-diaminononanoate: step 2/2. In terms of biological role, catalyzes the conversion of dethiobiotin (DTB) to biotin by the insertion of a sulfur atom into dethiobiotin via a radical-based mechanism. The polypeptide is Biotin synthase (Prochlorococcus marinus (strain MIT 9515)).